Reading from the N-terminus, the 133-residue chain is Brain natriuretic peptide (133 aa).

The signal sequence occupies residues 1 to 22 (MVVSFVSICGLLLIFNLPLSTS). Acidic residues predominate over residues 44 to 53 (SMSEETEEDQ). 2 disordered regions span residues 44 to 76 (SMSE…NRDQ) and 93 to 112 (TRKN…FGRR). A disulfide bridge connects residues Cys-108 and Cys-124.

This sequence belongs to the natriuretic peptide family.

It is found in the secreted. Functionally, cardiac hormone which may function as a paracrine antifibrotic factor in the heart. Also plays a key role in cardiovascular homeostasis through natriuresis, diuresis, vasorelaxation, and inhibition of renin and aldosterone secretion. Has a cGMP-stimulating activity. The polypeptide is Brain natriuretic peptide (nppb) (Takifugu rubripes (Japanese pufferfish)).